The primary structure comprises 183 residues: Proton-transporting V-type ATPase complex assembly regulator TMEM9 (183 aa).

The signal sequence occupies residues 1–20 (MKLLCLVAVVGCLLVPPAQA). N-linked (GlcNAc...) asparagine glycans are attached at residues asparagine 21, asparagine 38, and asparagine 47. The Extracellular portion of the chain corresponds to 21 to 89 (NKSSEDIRCK…YEERSTTTIK (69 aa)). A helical transmembrane segment spans residues 90-110 (VIIVIYLSVVGALLLYMAFLM). The Cytoplasmic portion of the chain corresponds to 111 to 183 (LVDPLIRKPD…TVFDRHKMLS (73 aa)). At serine 144 the chain carries Phosphoserine.

Belongs to the TMEM9 family. As to quaternary structure, interacts with the v-ATPase accessory protein ATP6AP2 and with the v-ATPase complex subunit ATP6V0D1; these interactions lead to the assembly of the v-ATPase complex. In terms of processing, N-glycosylated. Expressed in heart, lung, kidney, liver and intestines. Enriched in the hepatocytes around the central vein.

It is found in the lysosome membrane. Its subcellular location is the late endosome membrane. It localises to the endosome. The protein localises to the multivesicular body membrane. Its function is as follows. Transmembrane protein that binds to and facilitates the assembly of lysosomal proton-transporting V-type ATPase (v-ATPase), resulting in enhanced lysosomal acidification and trafficking. By bringing the v-ATPase accessory protein ATP6AP2 and the v-ATPase subunit ATP6V0D1 together, allows v-ATPase complex formation and activation. TMEM9-controlled vesicular acidification induces hyperactivation of Wnt/beta-catenin signaling, involved in development, tissue homeostasis and tissue regeneration, through lysosomal degradation of adenomatous polyposis coli/APC. In the liver, involved in hepatic regeneration. This is Proton-transporting V-type ATPase complex assembly regulator TMEM9 from Mus musculus (Mouse).